The following is a 58-amino-acid chain: Potassium channel toxin alpha-KTx BmKcug1a (58 aa).

An N-terminal signal peptide occupies residues 1–21 (MKISFLLLLAIVICSIGWTEA). The residue at position 22 (glutamine 22) is a Pyrrolidone carboxylic acid. Cystine bridges form between cysteine 28/cysteine 49, cysteine 34/cysteine 54, and cysteine 38/cysteine 56.

The protein belongs to the short scorpion toxin superfamily. Potassium channel inhibitor family. Alpha-KTx 01 subfamily. As to expression, expressed by the venom gland.

It localises to the secreted. Functionally, potent blocker of both large-conductance calcium-activated potassium channels (KCa1.1/KCNMA1) and voltage-gated potassium channels (Kv1.3/KCNA3 and ERG1/Kv11.1/KCNH2). The polypeptide is Potassium channel toxin alpha-KTx BmKcug1a (Olivierus martensii (Manchurian scorpion)).